A 164-amino-acid polypeptide reads, in one-letter code: MTDTQVTWLTQEAFDRLKAELDQLIANRPVIAAEINDRREEGDLRENGGYHAAREEQGQQEARIRQLQELLNNAKVGEAPKQSGVALPGSVVKVYYDDDENDTETFLIATRQEGISDGKLEVYSPNSPLGGALLDAKVGESRTYTVPSGNVVKVTLVSAEPYQG.

Residues 50–76 adopt a coiled-coil conformation; it reads YHAAREEQGQQEARIRQLQELLNNAKV.

It belongs to the GreA/GreB family.

Necessary for efficient RNA polymerase transcription elongation past template-encoded arresting sites. The arresting sites in DNA have the property of trapping a certain fraction of elongating RNA polymerases that pass through, resulting in locked ternary complexes. Cleavage of the nascent transcript by cleavage factors such as GreA or GreB allows the resumption of elongation from the new 3'terminus. GreA releases sequences of 2 to 3 nucleotides. This is Transcription elongation factor GreA from Mycolicibacterium smegmatis (strain ATCC 700084 / mc(2)155) (Mycobacterium smegmatis).